The sequence spans 386 residues: ATP phosphoribosyltransferase regulatory subunit (386 aa).

It belongs to the class-II aminoacyl-tRNA synthetase family. HisZ subfamily. In terms of assembly, heteromultimer composed of HisG and HisZ subunits.

The protein localises to the cytoplasm. Its pathway is amino-acid biosynthesis; L-histidine biosynthesis; L-histidine from 5-phospho-alpha-D-ribose 1-diphosphate: step 1/9. Functionally, required for the first step of histidine biosynthesis. May allow the feedback regulation of ATP phosphoribosyltransferase activity by histidine. The polypeptide is ATP phosphoribosyltransferase regulatory subunit (Limosilactobacillus fermentum (strain NBRC 3956 / LMG 18251) (Lactobacillus fermentum)).